A 61-amino-acid chain; its full sequence is Translational regulator CsrA (61 aa).

It belongs to the CsrA/RsmA family. In terms of assembly, homodimer; the beta-strands of each monomer intercalate to form a hydrophobic core, while the alpha-helices form wings that extend away from the core.

Its subcellular location is the cytoplasm. In terms of biological role, a key translational regulator that binds mRNA to regulate translation initiation and/or mRNA stability. Mediates global changes in gene expression, shifting from rapid growth to stress survival by linking envelope stress, the stringent response and the catabolite repression systems. Usually binds in the 5'-UTR; binding at or near the Shine-Dalgarno sequence prevents ribosome-binding, repressing translation, binding elsewhere in the 5'-UTR can activate translation and/or stabilize the mRNA. Its function is antagonized by small RNA(s). The chain is Translational regulator CsrA from Glaesserella parasuis serovar 5 (strain SH0165) (Haemophilus parasuis).